The primary structure comprises 562 residues: Formate--tetrahydrofolate ligase (562 aa).

71–78 (TPAGEGKS) serves as a coordination point for ATP.

This sequence belongs to the formate--tetrahydrofolate ligase family.

It catalyses the reaction (6S)-5,6,7,8-tetrahydrofolate + formate + ATP = (6R)-10-formyltetrahydrofolate + ADP + phosphate. It participates in one-carbon metabolism; tetrahydrofolate interconversion. In Bacillus cereus (strain ATCC 10987 / NRS 248), this protein is Formate--tetrahydrofolate ligase.